Here is a 284-residue protein sequence, read N- to C-terminus: Acetylglutamate kinase (284 aa).

Substrate is bound by residues 64–65 (GG), R86, and N179.

The protein belongs to the acetylglutamate kinase family. ArgB subfamily.

Its subcellular location is the cytoplasm. The catalysed reaction is N-acetyl-L-glutamate + ATP = N-acetyl-L-glutamyl 5-phosphate + ADP. It participates in amino-acid biosynthesis; L-arginine biosynthesis; N(2)-acetyl-L-ornithine from L-glutamate: step 2/4. In terms of biological role, catalyzes the ATP-dependent phosphorylation of N-acetyl-L-glutamate. The protein is Acetylglutamate kinase of Acaryochloris marina (strain MBIC 11017).